The chain runs to 213 residues: Receptor-binding cancer antigen expressed on SiSo cells (213 aa).

Residues Met-1–Phe-6 are Extracellular-facing. The chain crosses the membrane as a helical; Signal-anchor for type III membrane protein span at residues Arg-7–Cys-27. Over Arg-28–Ser-213 the chain is Cytoplasmic. Ser-36 is subject to Phosphoserine. Thr-41 carries the phosphothreonine modification. Tyr-94 carries the post-translational modification Phosphotyrosine. A coiled-coil region spans residues Gln-168–Gly-209. The segment covering Ala-179 to Asn-206 has biased composition (basic and acidic residues). Residues Ala-179–Ser-213 form a disordered region.

As to quaternary structure, homodimer.

It is found in the golgi apparatus membrane. In terms of biological role, may participate in suppression of cell proliferation and induces apoptotic cell death through activation of interleukin-1-beta converting enzyme (ICE)-like proteases. This is Receptor-binding cancer antigen expressed on SiSo cells (Ebag9) from Rattus norvegicus (Rat).